Here is a 419-residue protein sequence, read N- to C-terminus: Creatine kinase S-type, mitochondrial (419 aa).

Residues 1 to 39 constitute a mitochondrion transit peptide; that stretch reads MASAFSKLLTGRNASLLFTTLGTSALTTGYLLNRQKVSA. The segment at 40–64 is cardiolipin-binding; sequence DAREQHKLFPPSADYPDLRKHNNCM. Residues 46 to 132 form the Phosphagen kinase N-terminal domain; sequence KLFPPSADYP…FDPVIKLRHN (87 aa). The Phosphagen kinase C-terminal domain maps to 159–401; sequence YVLSSRVRTG…NYLVDCEKKL (243 aa). Residues 162–166 and histidine 225 each bind ATP; that span reads SSRVR. Tyrosine 255 carries the post-translational modification Phosphotyrosine. Residues arginine 270, arginine 326, 354–359, and aspartate 369 contribute to the ATP site; that span reads RGTGGV. Threonine 356 is subject to Phosphothreonine.

It belongs to the ATP:guanido phosphotransferase family. As to quaternary structure, exists as an octamer composed of four CKMT2 homodimers. In terms of tissue distribution, sarcomere-specific. Found only in heart and skeletal muscles.

The protein resides in the mitochondrion inner membrane. It carries out the reaction creatine + ATP = N-phosphocreatine + ADP + H(+). In terms of biological role, reversibly catalyzes the transfer of phosphate between ATP and various phosphogens (e.g. creatine phosphate). Creatine kinase isoenzymes play a central role in energy transduction in tissues with large, fluctuating energy demands, such as skeletal muscle, heart, brain and spermatozoa. The chain is Creatine kinase S-type, mitochondrial (Ckmt2) from Rattus norvegicus (Rat).